The following is a 621-amino-acid chain: Type 2 DNA topoisomerase 6 subunit B (621 aa).

Residues N48, D80, S101–R102, G111–S118, and K435 each bind ATP.

Belongs to the TOP6B family. As to quaternary structure, homodimer. Heterotetramer of two Top6A and two Top6B chains.

It catalyses the reaction ATP-dependent breakage, passage and rejoining of double-stranded DNA.. Its function is as follows. Relaxes both positive and negative superturns and exhibits a strong decatenase activity. The protein is Type 2 DNA topoisomerase 6 subunit B of Methanosarcina barkeri (strain Fusaro / DSM 804).